An 866-amino-acid polypeptide reads, in one-letter code: Autophagy-related protein 9 (866 aa).

Residues 1-94 lie on the Cytoplasmic side of the membrane; it reads MMSSGHKGPN…KGLWCIIVKW (94 aa). Residues 95 to 115 form a helical membrane-spanning segment; sequence AVELLSLGFIICFSGFFLLYV. Residues 116–153 lie on the Lumenal side of the membrane; that stretch reads DWNGLQNAKCGMDAVESGTKPCDLVKEAIHPHPLSPFT. A helical transmembrane segment spans residues 154–174; sequence LTTAIIVGYLALFSVYWLFCF. At 175–319 the chain is on the cytoplasmic side; it reads LRFFAQLKDT…VSNPTTLKKR (145 aa). An intramembrane segment occupies 320-340; that stretch reads LFVVGLAMLLLSPFLVIFMLV. The Cytoplasmic segment spans residues 341-404; that stretch reads YLFLRHAEQF…LKQFPSPIIS (64 aa). Residues 405-425 traverse the membrane as a helical segment; the sequence is IIAKFVSFVSGGFAAVLIIIA. The Lumenal portion of the chain corresponds to 426–433; the sequence is FLEESLLE. A helical membrane pass occupies residues 434–454; sequence GHIFGRNLFWYAAVFGTITAI. The Cytoplasmic portion of the chain corresponds to 455–507; the sequence is SRAAISDELLVLDPVGTMSLVVQNTHYMPKRWRGKENKDDVRLELETLFQYTG. Residues 508–528 lie within the membrane without spanning it; that stretch reads MMLLEEIASIFITPFLLMFVV. At 529-866 the chain is on the cytoplasmic side; sequence PKRVDDILQF…ETSTSSTTLR (338 aa). The interval 744-781 is disordered; sequence QPEGEDSYGSQHPLDGRNQWWGRGNHSQISTAHPATTN. A compositionally biased stretch (polar residues) spans 768–781; the sequence is NHSQISTAHPATTN.

Belongs to the ATG9 family. As to quaternary structure, homotrimer; forms a homotrimer with a central pore that forms a path between the two membrane leaflets. As to expression, expressed in roots, leaves, stems and flowers.

It is found in the preautophagosomal structure membrane. Functionally, phospholipid scramblase involved in autophagy by mediating autophagosomal membrane expansion. Cycles between the preautophagosomal structure/phagophore assembly site (PAS) and the cytoplasmic vesicle pool and supplies membrane for the growing autophagosome. Lipid scramblase activity plays a key role in preautophagosomal structure/phagophore assembly by distributing the phospholipids that arrive through ATG2 from the cytoplasmic to the luminal leaflet of the bilayer, thereby driving autophagosomal membrane expansion. In addition to autophagy, also plays a role in necrotic cell death. Plays an essential role in plant nutrient recycling. This Arabidopsis thaliana (Mouse-ear cress) protein is Autophagy-related protein 9.